Reading from the N-terminus, the 1029-residue chain is Sodium/potassium-transporting ATPase subunit alpha-4 (1029 aa).

Positions 1–37 are disordered; that stretch reads MGLWGKKGTVAPHDQSPRRRPKKGLIKKKMVKREKQK. The Cytoplasmic segment spans residues 1 to 95; the sequence is MGLWGKKGTV…NTVTPPPTTP (95 aa). Over residues 18–36 the composition is skewed to basic residues; it reads RRRPKKGLIKKKMVKREKQ. Positions 90–92 are interaction with phosphoinositide-3 kinase; the sequence is PPP. The helical transmembrane segment at 96–116 threads the bilayer; that stretch reads EWVKFCKQLFGGFSLLLWTGA. Over 117 to 139 the chain is Extracellular; that stretch reads ILCFVAYSIQIYFNEEPTKDNLY. A helical transmembrane segment spans residues 140-160; that stretch reads LSIVLSVVVIVTGCFSYYQEA. Over 161-296 the chain is Cytoplasmic; sequence KSSKIMESFK…VGQTPIAAEI (136 aa). Polar residues predominate over residues 223–237; the sequence is NSSLTGESEPQSRSP. Residues 223–242 are disordered; that stretch reads NSSLTGESEPQSRSPDFTHE. A helical transmembrane segment spans residues 297–316; sequence EHFIHLITVVAVFLGVTFFA. Residues 317–328 lie on the Extracellular side of the membrane; sequence LSLLLGYGWLEA. The helical transmembrane segment at 329–346 threads the bilayer; that stretch reads IIFLIGIIVANVPEGLLA. At 347 to 778 the chain is on the cytoplasmic side; sequence TVTVCLTLTA…EEGRLIFDNL (432 aa). Aspartate 384 acts as the 4-aspartylphosphate intermediate in catalysis. 2 residues coordinate Mg(2+): aspartate 723 and aspartate 727. The chain crosses the membrane as a helical span at residues 779-798; the sequence is KKSIMYTLTSNIPEITPFLM. Residues 799–808 lie on the Extracellular side of the membrane; that stretch reads FIILGIPLPL. The chain crosses the membrane as a helical span at residues 809-829; sequence GTITILCIDLGTDMVPAISLA. Residues 830 to 849 are Cytoplasmic-facing; the sequence is YESAESDIMKRLPRNPKTDN. The chain crosses the membrane as a helical span at residues 850 to 872; sequence LVNHRLIGMAYGQIGMIQALAGF. Residues 873–924 lie on the Extracellular side of the membrane; it reads FTYFVILAENGFRPVDLLGIRLHWEDKYLNDLEDSYGQQWTYEQRKVVEFTC. Residues 925 to 944 form a helical membrane-spanning segment; sequence QTAFFVTIVVVQWADLIISK. Residues 945 to 957 are Cytoplasmic-facing; sequence TRRNSLFQQGMRN. Phosphoserine; by PKA is present on serine 949. The chain crosses the membrane as a helical span at residues 958–976; the sequence is KVLIFGILEETLLAAFLSY. Residues 977–991 lie on the Extracellular side of the membrane; the sequence is TPGMDVALRMYPLKI. A helical transmembrane segment spans residues 992–1012; the sequence is TWWLCAIPYSILIFVYDEIRK. At 1013–1029 the chain is on the cytoplasmic side; that stretch reads LLIRQHPDGWVERETYY.

This sequence belongs to the cation transport ATPase (P-type) (TC 3.A.3) family. Type IIC subfamily. As to quaternary structure, the sodium/potassium-transporting ATPase is composed of a catalytic alpha subunit, an auxiliary non-catalytic beta subunit and an additional regulatory subunit. In terms of tissue distribution, specifically expressed in testis. Found in very low levels in skeletal muscle. Expressed in mature sperm (at protein level).

It is found in the cell membrane. The enzyme catalyses K(+)(out) + Na(+)(in) + ATP + H2O = K(+)(in) + Na(+)(out) + ADP + phosphate + H(+). With respect to regulation, specifically inhibited by an endogenous cardiac glycoside, ouabain. Its function is as follows. This is the catalytic component of the active enzyme, which catalyzes the hydrolysis of ATP coupled with the exchange of sodium and potassium ions across the plasma membrane. This action creates the electrochemical gradient of sodium and potassium ions, providing the energy for active transport of various nutrients. Plays a role in sperm motility. This chain is Sodium/potassium-transporting ATPase subunit alpha-4, found in Homo sapiens (Human).